The following is a 260-amino-acid chain: MVKRSQRVEKKAVEVNRGTWTAEEDEKLMNYVSAHGDKKWRMLPAKAGLKRCGKSCRLRWLNYLRPGIKRGNISEDEEDLIIRLHNLLGNRWSIIAGRIPGRTDNEIKNHWNTHLSKRSLTIEDLNKKHNPGIDNIDILPPTKITLTSSSDTFPVTPVCQTDQASDTNKNDVLVDSWTDLSGPDFDLEQFLSLLPMSDLCPGSNGNELEFDDFGIPRHDSKQDSFRSNDYNINYQECLDSQVWSCAFEYDDLDQFLDCQS.

HTH myb-type domains lie at 12–64 (AVEV…LNYL) and 65–119 (RPGI…SKRS). 2 consecutive DNA-binding regions (H-T-H motif) follow at residues 40 to 64 (WRMLPAKAGLKRCGKSCRLRWLNYL) and 92 to 115 (WSIIAGRIPGRTDNEIKNHWNTHL).

The protein resides in the nucleus. Its function is as follows. Transcription activator involved in the spatiotemporal regulation of flavonoid biosynthesis specifically in the corms of Montbretia. Activates the promoters of enzymes involved in the biosynthesis of the flavonol myricetin and the flavonol-glycoside montbretin A (MbA). MbA is a potent inhibitor of human pancreatic alpha-amylase and is being developed as drug candidate to treat type-2 diabetes. In Crocosmia x crocosmiiflora (Montbretia), this protein is Transcription factor MYB4.